A 344-amino-acid polypeptide reads, in one-letter code: Mitochondrial substrate carrier family protein D (344 aa).

Topologically, residues 1-22 (MDSTKTNNKWAAAGILNSVGKD) are mitochondrial intermembrane. Solcar repeat units lie at residues 17–104 (NSVG…CQSY), 119–212 (IPYH…MKRK), and 239–327 (VPAW…TRNL). Residues 23–43 (FVAGSVGGMSSIMAGHPFDTI) traverse the membrane as a helical segment. The Mitochondrial matrix portion of the chain corresponds to 44–75 (KVMLQDASGNLPKFKNGFQALKYIMKVDGIKG). A helical transmembrane segment spans residues 76–96 (IYRGLSVPLFSVSFTNSVFFA). Topologically, residues 97-116 (TNNFCQSYFHPPCKDENGED) are mitochondrial intermembrane. The chain crosses the membrane as a helical span at residues 117–137 (ILIPYHKAAAAGAIAGGVISL). Residues 138–186 (LITPRDLVKSKLQVQCRPFGSTNVSLQYKGPIDVIRQTIKRDGIKGMFK) are Mitochondrial matrix-facing. Residues 187–207 (GIRSTFCRDIPGDAVYFVVYE) traverse the membrane as a helical segment. At 208–238 (FMKRKLLALSKNNNNNNNNNDNNDNSSPKAG) the chain is on the mitochondrial intermembrane side. The chain crosses the membrane as a helical span at residues 239 to 259 (VPAWVAIGAGGCAGMSFWMSI). Over 260–301 (YPMDVVKTRIQTQPDHLPPQYTSVLQTITKIYREEGISVFFR) the chain is Mitochondrial matrix. The helical transmembrane segment at 302–321 (GFSATILRAFPTSAVNFLMY) threads the bilayer. At 322–344 (ETTRNLLNSKDPFYNNNDHYNAE) the chain is on the mitochondrial intermembrane side.

Belongs to the mitochondrial carrier (TC 2.A.29) family.

It localises to the mitochondrion inner membrane. In terms of biological role, calcium-dependent mitochondrial solute carrier. Mitochondrial solute carriers shuttle metabolites, nucleotides, and cofactors through the mitochondrial inner membrane. In Dictyostelium discoideum (Social amoeba), this protein is Mitochondrial substrate carrier family protein D (mcfD).